A 480-amino-acid polypeptide reads, in one-letter code: Krueppel-like factor 10 (480 aa).

Over residues 1-12 the composition is skewed to polar residues; it reads MLNFGASLQQAS. 3 disordered regions span residues 1–32, 64–83, and 97–146; these read MLNF…PWDK, VTPV…TPDL, and PSDF…APPL. Basic and acidic residues predominate over residues 14–32; that stretch reads GKMELISEKSKEGAHPWDK. Phosphoserine is present on Ser-183. The interval 202-222 is disordered; it reads AAVSPNRPKPEPSTAANGAEK. Residue Ser-249 is modified to Phosphoserine. 3 consecutive C2H2-type zinc fingers follow at residues 369 to 393, 399 to 423, and 429 to 451; these read HICS…VRTH, FSCS…RRTH, and FACP…ARRH.

This sequence belongs to the Sp1 C2H2-type zinc-finger protein family. Post-translationally, ubiquitinated; mediated by SIAH1 and leading to its subsequent proteasomal degradation.

It is found in the nucleus. Functionally, transcriptional repressor which binds to the consensus sequence 5'-GGTGTG-3'. Regulates the circadian expression of genes involved in lipogenesis, gluconeogenesis, and glycolysis in the liver. Represses the expression of PCK2, a rate-limiting step enzyme of gluconeogenesis. May play a role in the cell cycle regulation. Plays a role in the regulation of the circadian clock; binds to the GC box sequence in the promoter of the core clock component ARTNL/BMAL1 and represses its transcriptional activity. The polypeptide is Krueppel-like factor 10 (Klf10) (Rattus norvegicus (Rat)).